A 594-amino-acid polypeptide reads, in one-letter code: Putative phospholipase B-like 2 (594 aa).

The N-terminal stretch at 1 to 46 (MAAPVDGSSGGWAARALRRALALTSLTTLALLASLTGLLLSGPAGA) is a signal peptide. 2 N-linked (GlcNAc...) asparagine glycosylation sites follow: Asn-93 and Asn-115. Residues Cys-147 and Cys-157 are joined by a disulfide bond. N-linked (GlcNAc...) asparagine glycosylation is found at Asn-236 and Asn-441. Cys-497 and Cys-500 are disulfide-bonded. The N-linked (GlcNAc...) asparagine glycan is linked to Asn-520.

Belongs to the phospholipase B-like family. In terms of assembly, interacts with IGF2R. The p76 protein is synthesized as a 76 kDa precursor which is then processed into a N-terminal 28 kDa form and a C-terminal 40 kDa form. The C-terminal peptide is further processed into a 15 kDa form. In terms of processing, glycosylated; contains mannose 6-phosphate sugars. As to expression, present at highest levels in spleen, lung and brain (at protein level).

Its subcellular location is the lysosome lumen. Functionally, putative phospholipase. This chain is Putative phospholipase B-like 2 (Plbd2), found in Mus musculus (Mouse).